The chain runs to 190 residues: Small ribosomal subunit protein eS7 (190 aa).

Belongs to the eukaryotic ribosomal protein eS7 family.

This Manduca sexta (Tobacco hawkmoth) protein is Small ribosomal subunit protein eS7 (RpS7).